Here is a 726-residue protein sequence, read N- to C-terminus: MQQTTKLFLGALKYSIPHLGKCMPKQNYCNVADPYYNRLRLKNYRLTKCLQNKPKISELARNIPSRSFSVKDKLEKPESLQKRGINICMDAFEKVRTRLETQPQEEYEIVNAEIKHGGFVYYQEGCCLVRSKDEEADSDNYEVLFNLEELKLEQPFIDCIRVAPDEKYVAAKIRAEDSETSTCIVVKLSDQPAMEASFPNVSSFEWVKDEEDEDVLFYTFQRNLRCHDVYRATFGDNKRNERFYTEKDPSYFVFLYLTKDSRFLTLNIMNKTTSEVWLIDGLSPWDPPMLIQKRIHGMLYYVEHRDDELYILTNVGEPTEFKLMRTAADAPAIMNWDLFFTMKRNTKVVDLDMFKDHCVLFLKHSNLLYVNVIGLADDSVRSLKLPPWACGFIMDTNSDPKNCPFQLCSPIRPPKYYTYKFAEGKLFEETGHEDPITKTSRVLRIEAKSKDGKLVPMTVFHKTDSEDLQRKPLLVHVYGAYGMDLKMNFRPERRVLVDDGWILAYCHVRGGGELGLQWHADGRLTKKLNGLADLEACIKTLHSQGFSQPSLTTLSAFSAGGVLVGALCNSKPELLRAVTLEAPFLDVLNTMMDTTLPLTLEELEEWGNPSSDEKHKNYIKRYCPCQNMKPQHYPSVHITAYENDERVPLKGIVNYTEKLKEAVAEHSKGAGEGYQPPNIVLDIQPGGNHVIEDSHKKITTQMKFLYDELGLDSTDAFEALKKYLKV.

The residue at position 138 (Ser138) is a Phosphoserine. Catalysis depends on charge relay system residues Ser558, Asp644, and His689.

It belongs to the peptidase S9A family. In terms of assembly, homodimer. Interacts with the AP-1 complex.

It is found in the cytoplasm. The protein resides in the cytosol. Its subcellular location is the golgi apparatus. It localises to the trans-Golgi network. The protein localises to the cytoskeleton. It is found in the nucleus. Functionally, serine peptidase whose precise substrate specificity remains unclear. Does not cleave peptides after a arginine or lysine residue. Regulates trans-Golgi network morphology and sorting by regulating the membrane binding of the AP-1 complex. May play a role in the regulation of synaptic vesicle exocytosis. This Rattus norvegicus (Rat) protein is Prolyl endopeptidase-like (Prepl).